The sequence spans 211 residues: FMN-dependent NADH:quinone oxidoreductase 3 (211 aa).

Residue 102 to 105 participates in FMN binding; that stretch reads MWNF.

The protein belongs to the azoreductase type 1 family. As to quaternary structure, homodimer. The cofactor is FMN.

It carries out the reaction 2 a quinone + NADH + H(+) = 2 a 1,4-benzosemiquinone + NAD(+). The enzyme catalyses N,N-dimethyl-1,4-phenylenediamine + anthranilate + 2 NAD(+) = 2-(4-dimethylaminophenyl)diazenylbenzoate + 2 NADH + 2 H(+). Its function is as follows. Quinone reductase that provides resistance to thiol-specific stress caused by electrophilic quinones. In terms of biological role, also exhibits azoreductase activity. Catalyzes the reductive cleavage of the azo bond in aromatic azo compounds to the corresponding amines. This chain is FMN-dependent NADH:quinone oxidoreductase 3, found in Bacillus cereus (strain ATCC 10987 / NRS 248).